The following is a 568-amino-acid chain: Sulfite reductase [NADPH] hemoprotein beta-component (568 aa).

Cys425, Cys431, Cys470, and Cys474 together coordinate [4Fe-4S] cluster. Cys474 is a binding site for siroheme.

This sequence belongs to the nitrite and sulfite reductase 4Fe-4S domain family. As to quaternary structure, alpha(8)-beta(8). The alpha component is a flavoprotein, the beta component is a hemoprotein. The cofactor is siroheme. Requires [4Fe-4S] cluster as cofactor.

It carries out the reaction hydrogen sulfide + 3 NADP(+) + 3 H2O = sulfite + 3 NADPH + 4 H(+). It functions in the pathway sulfur metabolism; hydrogen sulfide biosynthesis; hydrogen sulfide from sulfite (NADPH route): step 1/1. Its function is as follows. Component of the sulfite reductase complex that catalyzes the 6-electron reduction of sulfite to sulfide. This is one of several activities required for the biosynthesis of L-cysteine from sulfate. The protein is Sulfite reductase [NADPH] hemoprotein beta-component of Xanthomonas campestris pv. campestris (strain ATCC 33913 / DSM 3586 / NCPPB 528 / LMG 568 / P 25).